A 248-amino-acid chain; its full sequence is Pyridoxine 5'-phosphate synthase (248 aa).

N7 is a 3-amino-2-oxopropyl phosphate binding site. D9 to H10 is a binding site for 1-deoxy-D-xylulose 5-phosphate. Position 18 (R18) interacts with 3-amino-2-oxopropyl phosphate. H43 acts as the Proton acceptor in catalysis. The 1-deoxy-D-xylulose 5-phosphate site is built by R45 and H50. E70 serves as the catalytic Proton acceptor. Position 100 (T100) interacts with 1-deoxy-D-xylulose 5-phosphate. H191 serves as the catalytic Proton donor. 3-amino-2-oxopropyl phosphate is bound by residues G192 and G213–H214.

Belongs to the PNP synthase family. Homooctamer; tetramer of dimers.

It is found in the cytoplasm. The enzyme catalyses 3-amino-2-oxopropyl phosphate + 1-deoxy-D-xylulose 5-phosphate = pyridoxine 5'-phosphate + phosphate + 2 H2O + H(+). It functions in the pathway cofactor biosynthesis; pyridoxine 5'-phosphate biosynthesis; pyridoxine 5'-phosphate from D-erythrose 4-phosphate: step 5/5. Functionally, catalyzes the complicated ring closure reaction between the two acyclic compounds 1-deoxy-D-xylulose-5-phosphate (DXP) and 3-amino-2-oxopropyl phosphate (1-amino-acetone-3-phosphate or AAP) to form pyridoxine 5'-phosphate (PNP) and inorganic phosphate. In Bordetella bronchiseptica (strain ATCC BAA-588 / NCTC 13252 / RB50) (Alcaligenes bronchisepticus), this protein is Pyridoxine 5'-phosphate synthase.